A 564-amino-acid polypeptide reads, in one-letter code: Isocitrate dehydrogenase kinase/phosphatase (564 aa).

ATP-binding positions include Ala-315–Met-321 and Lys-336. The active site involves Asp-371.

Belongs to the AceK family.

Its subcellular location is the cytoplasm. It catalyses the reaction L-seryl-[isocitrate dehydrogenase] + ATP = O-phospho-L-seryl-[isocitrate dehydrogenase] + ADP + H(+). Its function is as follows. Bifunctional enzyme which can phosphorylate or dephosphorylate isocitrate dehydrogenase (IDH) on a specific serine residue. This is a regulatory mechanism which enables bacteria to bypass the Krebs cycle via the glyoxylate shunt in response to the source of carbon. When bacteria are grown on glucose, IDH is fully active and unphosphorylated, but when grown on acetate or ethanol, the activity of IDH declines drastically concomitant with its phosphorylation. The protein is Isocitrate dehydrogenase kinase/phosphatase of Idiomarina loihiensis (strain ATCC BAA-735 / DSM 15497 / L2-TR).